Reading from the N-terminus, the 83-residue chain is Sulfur carrier protein TusA (83 aa).

C19 functions as the Cysteine persulfide intermediate in the catalytic mechanism.

The protein belongs to the sulfur carrier protein TusA family.

The protein localises to the cytoplasm. Functionally, sulfur carrier protein which probably makes part of a sulfur-relay system. The sequence is that of Sulfur carrier protein TusA from Aliivibrio salmonicida (strain LFI1238) (Vibrio salmonicida (strain LFI1238)).